Consider the following 408-residue polypeptide: Peptidase T (408 aa).

His-79 contacts Zn(2+). Asp-81 is an active-site residue. Residue Asp-139 coordinates Zn(2+). Glu-173 functions as the Proton acceptor in the catalytic mechanism. Zn(2+)-binding residues include Glu-174, Asp-196, and His-378.

The protein belongs to the peptidase M20B family. The cofactor is Zn(2+).

The protein resides in the cytoplasm. It carries out the reaction Release of the N-terminal residue from a tripeptide.. Its function is as follows. Cleaves the N-terminal amino acid of tripeptides. The chain is Peptidase T from Shouchella clausii (strain KSM-K16) (Alkalihalobacillus clausii).